We begin with the raw amino-acid sequence, 1755 residues long: Transposon Ty1-LR2 Gag-Pol polyprotein (1755 aa).

3 stretches are compositionally biased toward polar residues: residues 1–23 (MESQ…SVTS), 48–60 (TKAN…TPAS), and 127–152 (QSQF…GNTF). Disordered stretches follow at residues 1 to 93 (MESQ…MMTQ), 126 to 174 (PQSQ…PPPM), and 352 to 421 (GSRN…SKST). The segment covering 153-165 (TDSSSADSDMTST) has biased composition (low complexity). Residues 299–401 (NNGIHINNKV…NSKSKTARAH (103 aa)) form an RNA-binding region. Residues 402-418 (NVSTSNNSPSTDNDSIS) are compositionally biased toward low complexity. Phosphoserine is present on Ser416. The active-site For protease activity; shared with dimeric partner is the Asp461. Residues 583 to 640 (NVHTSESTRKYPYPFIHRMLAHANAPTIRYSLKNNTITYFNESDVDWSSAIDYQCPDC) are integrase-type zinc finger-like. The region spanning 660–835 (NSYEPFQYLH…AGLDISTLLP (176 aa)) is the Integrase catalytic domain. 2 residues coordinate Mg(2+): Asp671 and Asp736. Disordered regions lie at residues 956–1087 (SKAV…ETEK), 1092–1111 (RSPS…NIVP), and 1130–1187 (DLPL…DNET). Over residues 960–969 (SPTDSTPPST) the composition is skewed to low complexity. Positions 1005-1015 (STPQISNIEST) are enriched in polar residues. Residues 1038–1053 (ESSHASKSKDFRHSDS) show a composition bias toward basic and acidic residues. Composition is skewed to polar residues over residues 1054–1082 (YSEN…QISD) and 1101–1111 (PENNSSHNIVP). The Bipartite nuclear localization signal motif lies at 1178–1212 (KKRSLEDNETEIKVSRDTWNTKNMRSLEPPRSKKR). The region spanning 1338–1476 (NNYYITQLDI…DILGLEIKYQ (139 aa)) is the Reverse transcriptase Ty1/copia-type domain. Residues Asp1346, Asp1427, Asp1428, Asp1610, Glu1652, and Asp1685 each contribute to the Mg(2+) site. In terms of domain architecture, RNase H Ty1/copia-type spans 1610 to 1752 (DASYGNQPYY…IKTFKLLTNK (143 aa)).

As to quaternary structure, the capsid protein forms a homotrimer, from which the VLPs are assembled. The protease is a homodimer, whose active site consists of two apposed aspartic acid residues. Post-translationally, initially, virus-like particles (VLPs) are composed of the structural unprocessed proteins Gag and Gag-Pol, and also contain the host initiator methionine tRNA (tRNA(i)-Met) which serves as a primer for minus-strand DNA synthesis, and a dimer of genomic Ty RNA. Processing of the polyproteins occurs within the particle and proceeds by an ordered pathway, called maturation. First, the protease (PR) is released by autocatalytic cleavage of the Gag-Pol polyprotein yielding capsid protein p45 and a Pol-p154 precursor protein. This cleavage is a prerequisite for subsequent processing of Pol-p154 at the remaining sites to release the mature structural and catalytic proteins. Maturation takes place prior to the RT reaction and is required to produce transposition-competent VLPs.

The protein localises to the cytoplasm. The protein resides in the nucleus. It catalyses the reaction DNA(n) + a 2'-deoxyribonucleoside 5'-triphosphate = DNA(n+1) + diphosphate. The enzyme catalyses Endonucleolytic cleavage to 5'-phosphomonoester.. In terms of biological role, capsid protein (CA) is the structural component of the virus-like particle (VLP), forming the shell that encapsulates the retrotransposons dimeric RNA genome. The particles are assembled from trimer-clustered units and there are holes in the capsid shells that allow for the diffusion of macromolecules. CA also has nucleocapsid-like chaperone activity, promoting primer tRNA(i)-Met annealing to the multipartite primer-binding site (PBS), dimerization of Ty1 RNA and initiation of reverse transcription. Its function is as follows. The aspartyl protease (PR) mediates the proteolytic cleavages of the Gag and Gag-Pol polyproteins after assembly of the VLP. Reverse transcriptase/ribonuclease H (RT) is a multifunctional enzyme that catalyzes the conversion of the retro-elements RNA genome into dsDNA within the VLP. The enzyme displays a DNA polymerase activity that can copy either DNA or RNA templates, and a ribonuclease H (RNase H) activity that cleaves the RNA strand of RNA-DNA heteroduplexes during plus-strand synthesis and hydrolyzes RNA primers. The conversion leads to a linear dsDNA copy of the retrotransposon that includes long terminal repeats (LTRs) at both ends. Functionally, integrase (IN) targets the VLP to the nucleus, where a subparticle preintegration complex (PIC) containing at least integrase and the newly synthesized dsDNA copy of the retrotransposon must transit the nuclear membrane. Once in the nucleus, integrase performs the integration of the dsDNA into the host genome. This chain is Transposon Ty1-LR2 Gag-Pol polyprotein (TY1B-LR2), found in Saccharomyces cerevisiae (strain ATCC 204508 / S288c) (Baker's yeast).